The primary structure comprises 222 residues: Probable GTP-binding protein EngB (222 aa).

An EngB-type G domain is found at 25-199; sequence AGVEVAFAGR…SQLLQNWFDT (175 aa). GTP-binding positions include 33-40, 60-64, 78-81, 145-148, and 178-180; these read GRSNAGKS, GRTQH, DLPG, TKAD, and FSS. Mg(2+)-binding residues include Ser40 and Thr62.

Belongs to the TRAFAC class TrmE-Era-EngA-EngB-Septin-like GTPase superfamily. EngB GTPase family. Requires Mg(2+) as cofactor.

Its function is as follows. Necessary for normal cell division and for the maintenance of normal septation. The polypeptide is Probable GTP-binding protein EngB (Nitrosomonas europaea (strain ATCC 19718 / CIP 103999 / KCTC 2705 / NBRC 14298)).